A 340-amino-acid chain; its full sequence is MRGTPAVLVDGKPVGAKDGSMFDAAGFARTLKGRAWLRRVGAVVEIPAELVEVQLRYGGAAGREFVEGLPGRVAEFLERWGLRVAGPAMHGMTALVLPVVRADGTEAALKLLVPDEESAGEPVALRAWDGRGCVRLLEWDGPTGTLLLERLDAGRHLSGLVERDARAAVTVVAGLLARLTSVRAPEGLRGLGEVAAGLLAGVPEAAGRLADAGERRLLRDCAAALAEVAAEPGDRLLHWDLHFGNVLAGEREPWLAIDPKPLAGDPGFELLPALVNGFRAGEVGWRFDLLTGVVGLDRERARAWTLGRVVQNCLWEVEDGEVALPEREVAVAEVLLGRAG.

Asp-240 functions as the Proton acceptor in the catalytic mechanism.

This sequence belongs to the aminoglycoside phosphotransferase family.

In terms of biological role, potential phosphotransferase that inactivates hydroxyurea by phosphorylation of the hydroxy group in the hydroxylamine moiety. The protein is Hydroxyurea phosphotransferase (hur) of Kitasatospora aureofaciens (Streptomyces aureofaciens).